The following is a 441-amino-acid chain: Hydroxycinnamoyl-CoA:5-hydroxyanthranilate N-hydroxycinnamoyltransferase HHT1 (441 aa).

Active-site proton acceptor residues include His-158 and Asp-388.

The protein belongs to the plant acyltransferase family.

The catalysed reaction is 5-hydroxyanthranilate + (E)-4-coumaroyl-CoA = avenanthramide A + CoA. The enzyme catalyses 5-hydroxyanthranilate + (E)-caffeoyl-CoA = avenanthramide C + CoA. Its function is as follows. Involved in the biosynthesis of avenanthramide phytoalexins, which are phenolic alkaloids found mainly in oats. Catalyzes the N-acylation of 5-hydroxyanthranilate with 4-coumaroyl-CoA or caffeoyl-CoA as acyl donors, forming avenanthramide A and avenanthramide C, respectively. Does not accept feruloyl-CoA as a substrate. The chain is Hydroxycinnamoyl-CoA:5-hydroxyanthranilate N-hydroxycinnamoyltransferase HHT1 from Avena sativa (Oat).